A 313-amino-acid polypeptide reads, in one-letter code: MPIRIPDQLPASDVLREENIFIMPLSRASTQEIRPLRVLILNLMPKKIETETQFLRLLSNSPLQVDVELLRIDDRPSKNTPTEHLDNFYRQFEMVKGRNFDGLIITGAPLGLVQFEDVIYWDHLKTIMEWANKHVTSTLYVCWAAQAGLKLLYDLPKRTRKDKLSGVYNHEIHNPYHPILRGFDDTFLAPHSRYADFSQEYLAEHTDLDVLATSDVAGVYLAATKDKRNVFVTGHPEYDAHTLHNEYIRDLGEGMEPVIPINYYPNNNPDNKPVASWRSHGHLLFSNWLNYCVYQQTPYDLDHFSEDNFTKDD.

The Acyl-thioester intermediate role is filled by Cys-142. Positions 163 and 192 each coordinate substrate. The active-site Proton acceptor is His-235. Glu-237 is a catalytic residue. Arg-249 contributes to the substrate binding site.

Belongs to the MetA family.

Its subcellular location is the cytoplasm. The catalysed reaction is L-homoserine + succinyl-CoA = O-succinyl-L-homoserine + CoA. It functions in the pathway amino-acid biosynthesis; L-methionine biosynthesis via de novo pathway; O-succinyl-L-homoserine from L-homoserine: step 1/1. In terms of biological role, transfers a succinyl group from succinyl-CoA to L-homoserine, forming succinyl-L-homoserine. The polypeptide is Homoserine O-succinyltransferase (Vibrio atlanticus (strain LGP32) (Vibrio splendidus (strain Mel32))).